A 247-amino-acid polypeptide reads, in one-letter code: UDP-2,3-diacylglucosamine hydrolase (247 aa).

Positions 8, 10, 41, 79, and 114 each coordinate Mn(2+). Residue 79 to 80 (NR) participates in substrate binding. Residues aspartate 122, serine 160, aspartate 171, asparagine 174, and histidine 202 each coordinate substrate. Histidine 202 and histidine 204 together coordinate Mn(2+).

This sequence belongs to the LpxH family. Mn(2+) is required as a cofactor.

Its subcellular location is the cell inner membrane. The catalysed reaction is UDP-2-N,3-O-bis[(3R)-3-hydroxytetradecanoyl]-alpha-D-glucosamine + H2O = 2-N,3-O-bis[(3R)-3-hydroxytetradecanoyl]-alpha-D-glucosaminyl 1-phosphate + UMP + 2 H(+). It participates in glycolipid biosynthesis; lipid IV(A) biosynthesis; lipid IV(A) from (3R)-3-hydroxytetradecanoyl-[acyl-carrier-protein] and UDP-N-acetyl-alpha-D-glucosamine: step 4/6. Its function is as follows. Hydrolyzes the pyrophosphate bond of UDP-2,3-diacylglucosamine to yield 2,3-diacylglucosamine 1-phosphate (lipid X) and UMP by catalyzing the attack of water at the alpha-P atom. Involved in the biosynthesis of lipid A, a phosphorylated glycolipid that anchors the lipopolysaccharide to the outer membrane of the cell. In Xanthomonas oryzae pv. oryzae (strain MAFF 311018), this protein is UDP-2,3-diacylglucosamine hydrolase.